The following is an 830-amino-acid chain: Frameshifted structural polyprotein (830 aa).

Residues 58–109 (AIAPARPPKPKKKKTTKPKPKTQPKKINGKTQQQKKKDKQADKKKKKPGKRE) form a disordered region. A compositionally biased stretch (basic residues) spans 65-107 (PKPKKKKTTKPKPKTQPKKINGKTQQQKKKDKQADKKKKKPGK). The interval 94 to 106 (KDKQADKKKKKPG) is ribosome-binding. A disulfide bridge links Cys119 with Cys134. The region spanning 119–267 (CIFEVKHEGK…RVTPEGSEEW (149 aa)) is the Peptidase S3 domain. Residues His145, Asp167, and Ser219 each act as charge relay system in the active site. Asn280, Asn327, Asn533, and Asn595 each carry an N-linked (GlcNAc...) asparagine; by host glycan. The chain crosses the membrane as a helical span at residues 702-722 (AVVGMSLLALISIFASCYMLV). Residues Cys718, Cys728, Cys748, and Cys749 are each lipidated (S-palmitoyl cysteine; by host). The interval 728-748 (CLTPYALTPGAAVPWTLGILC) is transient transmembrane before p62-6K protein processing. The next 2 helical transmembrane spans lie at 771–791 (ALFWLEFAAPVACILIITYCL) and 793–813 (NVLCCCKSLSFLSATEPRGHR).

In terms of assembly, homodimer. Homomultimer. Interacts with host karyopherin KPNA4; this interaction allows the nuclear import of the viral capsid protein. Precursor of protein E3/E2: The precursor of protein E3/E2 and E1 form a heterodimer shortly after synthesis. Interacts with host IRAK1; the interaction leads to inhibition of IRAK1-dependent signaling. As to quaternary structure, processing of the precursor of protein E3/E2 into E2 and E3 results in a heterodimer of the spike glycoproteins E2 and E1. Spike at virion surface are constituted of three E2-E1 heterodimers. Interacts with 6K protein. Interacts with host MXRA8; this interaction mediates virus entry. In terms of processing, specific enzymatic cleavages in vivo yield mature proteins. Capsid protein is auto-cleaved during polyprotein translation, unmasking a signal peptide at the N-terminus of the precursor of E3/E2. The remaining polyprotein is then targeted to the host endoplasmic reticulum, where host signal peptidase cleaves it into pE2 and TF. pE2 is further processed to mature E3 and E2 by host furin in trans-Golgi vesicle.

The protein resides in the virion. The protein localises to the host cytoplasm. It is found in the host cell membrane. It localises to the host nucleus. Its subcellular location is the virion membrane. It catalyses the reaction Autocatalytic release of the core protein from the N-terminus of the togavirus structural polyprotein by hydrolysis of a -Trp-|-Ser- bond.. Its function is as follows. Forms an icosahedral capsid with a T=4 symmetry composed of 240 copies of the capsid protein surrounded by a lipid membrane through which penetrate 80 spikes composed of trimers of E1-E2 heterodimers. The capsid protein binds to the viral RNA genome at a site adjacent to a ribosome binding site for viral genome translation following genome release. Possesses a protease activity that results in its autocatalytic cleavage from the nascent structural protein. Following its self-cleavage, the capsid protein transiently associates with ribosomes, and within several minutes the protein binds to viral RNA and rapidly assembles into icosahedric core particles. The resulting nucleocapsid eventually associates with the cytoplasmic domain of the spike glycoprotein E2 at the cell membrane, leading to budding and formation of mature virions. In case of infection, new virions attach to target cells and after clathrin-mediated endocytosis their membrane fuses with the host endosomal membrane. This leads to the release of the nucleocapsid into the cytoplasm, followed by an uncoating event necessary for the genomic RNA to become accessible. The uncoating might be triggered by the interaction of capsid proteins with ribosomes. Binding of ribosomes would release the genomic RNA since the same region is genomic RNA-binding and ribosome-binding. Specifically inhibits interleukin-1 receptor-associated kinase 1/IRAK1-dependent signaling during viral entry, representing a means by which the alphaviruses may evade innate immune detection and activation prior to viral gene expression. In terms of biological role, provides the signal sequence for p62 (E3/E2) translocation to the host endoplasmic reticulum. Mediates pH protection of E1 during secretory pathway trans- port. Plays a role in viral attachment to target host cell, by binding to the cell receptor. Synthesized as a p62 precursor which is processed by furin at the cell membrane just before virion budding, giving rise to E2-E1 heterodimer. The p62-E1 heterodimer is stable, whereas E2-E1 is unstable and dissociate at low pH. p62 is processed at the last step, presumably to avoid E1 fusion activation before its final export to cell surface. E2 C-terminus contains a transitory transmembrane that would be disrupted by palmitoylation, resulting in reorientation of the C-terminal tail from lumenal to cytoplasmic side. This step is critical since E2 C-terminus is involved in budding by interacting with capsid proteins. This release of E2 C-terminus in cytoplasm occurs lately in protein export, and precludes premature assembly of particles at the endoplasmic reticulum membrane. Functionally, virion component that may play a role during viral assembly. The sequence is that of Frameshifted structural polyprotein from Aedes (Middle-African hedgehog).